The sequence spans 150 residues: MSIVDNKKAFFDYFIEERFEAGLVLEGWEVKAIRAGRVHVKEAYVVIRKAELFLIGCHITPLLSASTHIVPDSTRTRKLLLNAIEIRKLIGKVEQKGYTLVPLNLHFTKGNVKCEIGLARGKKQHDKRAATKEREWEVQKGRIARGDLNA.

It belongs to the SmpB family.

It is found in the cytoplasm. Functionally, required for rescue of stalled ribosomes mediated by trans-translation. Binds to transfer-messenger RNA (tmRNA), required for stable association of tmRNA with ribosomes. tmRNA and SmpB together mimic tRNA shape, replacing the anticodon stem-loop with SmpB. tmRNA is encoded by the ssrA gene; the 2 termini fold to resemble tRNA(Ala) and it encodes a 'tag peptide', a short internal open reading frame. During trans-translation Ala-aminoacylated tmRNA acts like a tRNA, entering the A-site of stalled ribosomes, displacing the stalled mRNA. The ribosome then switches to translate the ORF on the tmRNA; the nascent peptide is terminated with the 'tag peptide' encoded by the tmRNA and targeted for degradation. The ribosome is freed to recommence translation, which seems to be the essential function of trans-translation. This is SsrA-binding protein from Polynucleobacter asymbioticus (strain DSM 18221 / CIP 109841 / QLW-P1DMWA-1) (Polynucleobacter necessarius subsp. asymbioticus).